Reading from the N-terminus, the 341-residue chain is Hygromycin-B 4-O-kinase (341 aa).

The active-site Proton acceptor is the D198.

Belongs to the aminoglycoside phosphotransferase family.

It carries out the reaction hygromycin B + ATP = 4-O-phosphohygromycin B + ADP + H(+). Functionally, the aminoglycoside phosphotransferases achieve inactivation of their antibiotic substrates by phosphorylation. Only phosphorylates hygromycin and closely related compounds such as demethyl analogs and destomycin. The polypeptide is Hygromycin-B 4-O-kinase (hph) (Escherichia coli).